The chain runs to 311 residues: Aspartate carbamoyltransferase catalytic subunit (311 aa).

Carbamoyl phosphate contacts are provided by R55 and T56. Position 85 (K85) interacts with L-aspartate. Carbamoyl phosphate contacts are provided by R106, H135, and Q138. Positions 168 and 230 each coordinate L-aspartate. Carbamoyl phosphate-binding residues include L268 and P269.

This sequence belongs to the aspartate/ornithine carbamoyltransferase superfamily. ATCase family. Heterododecamer (2C3:3R2) of six catalytic PyrB chains organized as two trimers (C3), and six regulatory PyrI chains organized as three dimers (R2).

It carries out the reaction carbamoyl phosphate + L-aspartate = N-carbamoyl-L-aspartate + phosphate + H(+). It participates in pyrimidine metabolism; UMP biosynthesis via de novo pathway; (S)-dihydroorotate from bicarbonate: step 2/3. Catalyzes the condensation of carbamoyl phosphate and aspartate to form carbamoyl aspartate and inorganic phosphate, the committed step in the de novo pyrimidine nucleotide biosynthesis pathway. This Klebsiella pneumoniae subsp. pneumoniae (strain ATCC 700721 / MGH 78578) protein is Aspartate carbamoyltransferase catalytic subunit.